Reading from the N-terminus, the 70-residue chain is Exodeoxyribonuclease 7 small subunit (70 aa).

The protein belongs to the XseB family. In terms of assembly, heterooligomer composed of large and small subunits.

The protein localises to the cytoplasm. The catalysed reaction is Exonucleolytic cleavage in either 5'- to 3'- or 3'- to 5'-direction to yield nucleoside 5'-phosphates.. Functionally, bidirectionally degrades single-stranded DNA into large acid-insoluble oligonucleotides, which are then degraded further into small acid-soluble oligonucleotides. The chain is Exodeoxyribonuclease 7 small subunit from Magnetococcus marinus (strain ATCC BAA-1437 / JCM 17883 / MC-1).